Reading from the N-terminus, the 213-residue chain is MKALKIALTKGRLEKDAVALLEKAGIDCSSMTDKKRKLIFHSSTQPISFILVKAVDVMTYVKHGVADIGIVGKDVLMEASKSHYEMLDLEIGKCQFCLASTPDFDPSSYRRKIIATKYPTVASKFFREKGEDVEIIKIEGSVEIAPVLGLADAIIDIVETGSTLKENGLLIYEKMYPISARLIVNKASLKQNKTQIFQLIDQLEQAIKEERIE.

Belongs to the ATP phosphoribosyltransferase family. Short subfamily. As to quaternary structure, heteromultimer composed of HisG and HisZ subunits.

Its subcellular location is the cytoplasm. The catalysed reaction is 1-(5-phospho-beta-D-ribosyl)-ATP + diphosphate = 5-phospho-alpha-D-ribose 1-diphosphate + ATP. It participates in amino-acid biosynthesis; L-histidine biosynthesis; L-histidine from 5-phospho-alpha-D-ribose 1-diphosphate: step 1/9. Its function is as follows. Catalyzes the condensation of ATP and 5-phosphoribose 1-diphosphate to form N'-(5'-phosphoribosyl)-ATP (PR-ATP). Has a crucial role in the pathway because the rate of histidine biosynthesis seems to be controlled primarily by regulation of HisG enzymatic activity. The sequence is that of ATP phosphoribosyltransferase from Listeria monocytogenes serotype 4a (strain HCC23).